Here is a 63-residue protein sequence, read N- to C-terminus: Large ribosomal subunit protein bL28 (63 aa).

The protein belongs to the bacterial ribosomal protein bL28 family.

This is Large ribosomal subunit protein bL28 from Dictyoglomus thermophilum (strain ATCC 35947 / DSM 3960 / H-6-12).